The sequence spans 165 residues: Small ribosomal subunit protein uS5 (165 aa).

The 64-residue stretch at 10–73 (LKEKVVHINR…EDAKKNIVEV (64 aa)) folds into the S5 DRBM domain.

The protein belongs to the universal ribosomal protein uS5 family. In terms of assembly, part of the 30S ribosomal subunit. Contacts proteins S4 and S8.

Its function is as follows. With S4 and S12 plays an important role in translational accuracy. In terms of biological role, located at the back of the 30S subunit body where it stabilizes the conformation of the head with respect to the body. The chain is Small ribosomal subunit protein uS5 from Clostridium botulinum (strain ATCC 19397 / Type A).